The sequence spans 461 residues: Probable lipid II flippase MurJ (461 aa).

Helical transmembrane passes span 5 to 25 (ILGA…PNLF), 51 to 71 (FASL…LLVA), 96 to 116 (IVAI…LGAL), 123 to 143 (FFAS…ALLI), 156 to 176 (LSYG…YPLV), 229 to 249 (IASF…VSYL), 258 to 278 (LPLA…IAIA), 293 to 313 (KAWF…IMLS), 337 to 357 (VFSL…FSLW), 372 to 392 (LISL…LGVL), 402 to 422 (GLFL…LGII), and 429 to 449 (LVIL…KSWV).

The protein belongs to the MurJ/MviN family.

Its subcellular location is the cell inner membrane. It participates in cell wall biogenesis; peptidoglycan biosynthesis. Functionally, involved in peptidoglycan biosynthesis. Transports lipid-linked peptidoglycan precursors from the inner to the outer leaflet of the cytoplasmic membrane. The polypeptide is Probable lipid II flippase MurJ (Helicobacter pylori (strain ATCC 700392 / 26695) (Campylobacter pylori)).